Here is a 25-residue protein sequence, read N- to C-terminus: Omega-conotoxin MVIIB (25 aa).

3 disulfide bridges follow: cysteine 1–cysteine 16, cysteine 8–cysteine 20, and cysteine 15–cysteine 25. The residue at position 25 (cysteine 25) is a Cysteine amide.

It belongs to the conotoxin O1 superfamily. As to expression, expressed by the venom duct.

It is found in the secreted. In terms of biological role, omega-conotoxins act at presynaptic membranes, they bind and block voltage-gated calcium channels (Cav). The sequence is that of Omega-conotoxin MVIIB from Conus magus (Magical cone).